Consider the following 234-residue polypeptide: Small ribosomal subunit protein uS3 (234 aa).

In terms of domain architecture, KH type-2 spans isoleucine 39–arginine 107. Basic and acidic residues predominate over residues proline 213–serine 222. Positions proline 213 to lysine 234 are disordered. A compositionally biased stretch (basic residues) spans lysine 223–lysine 234.

This sequence belongs to the universal ribosomal protein uS3 family. As to quaternary structure, part of the 30S ribosomal subunit. Forms a tight complex with proteins S10 and S14.

Binds the lower part of the 30S subunit head. Binds mRNA in the 70S ribosome, positioning it for translation. In Aliarcobacter butzleri (strain RM4018) (Arcobacter butzleri), this protein is Small ribosomal subunit protein uS3.